The chain runs to 264 residues: Acyl-[acyl-carrier-protein]--UDP-N-acetylglucosamine O-acyltransferase (264 aa).

The protein belongs to the transferase hexapeptide repeat family. LpxA subfamily. As to quaternary structure, homotrimer.

It is found in the cytoplasm. The catalysed reaction is a (3R)-hydroxyacyl-[ACP] + UDP-N-acetyl-alpha-D-glucosamine = a UDP-3-O-[(3R)-3-hydroxyacyl]-N-acetyl-alpha-D-glucosamine + holo-[ACP]. The protein operates within glycolipid biosynthesis; lipid IV(A) biosynthesis; lipid IV(A) from (3R)-3-hydroxytetradecanoyl-[acyl-carrier-protein] and UDP-N-acetyl-alpha-D-glucosamine: step 1/6. Its function is as follows. Involved in the biosynthesis of lipid A, a phosphorylated glycolipid that anchors the lipopolysaccharide to the outer membrane of the cell. The protein is Acyl-[acyl-carrier-protein]--UDP-N-acetylglucosamine O-acyltransferase of Rickettsia typhi (strain ATCC VR-144 / Wilmington).